A 378-amino-acid chain; its full sequence is Alginate lyase (378 aa).

Residues 1-28 (MQTPKLIRPTLLSMAILSSMAWATGASA) form the signal peptide. Substrate-binding positions include 67–68 (SK), 140–141 (HT), and tyrosine 258.

The protein belongs to the polysaccharide lyase 5 family.

It localises to the periplasm. It catalyses the reaction Eliminative cleavage of alginate to give oligosaccharides with 4-deoxy-alpha-L-erythro-hex-4-enuronosyl groups at their non-reducing ends and beta-D-mannuronate at their reducing end.. With respect to regulation, the monovalent cation sodium enhances activity but is not absolutely required. Functionally, catalyzes the depolymerization of alginate by cleaving the beta-1,4 glycosidic bond between two adjacent sugar residues via a beta-elimination mechanism. Degrades deacetylated polymannuronate (polyM) alginate from P.aeruginosa more efficiently than non-deacetylated polyM and alginate from M.pyrifera. AlgL from P.syringae also degrades its own alginate, which may indicate a role in cleaving preformed alginate and/or in determining the length of the alginate polymer. May serve to degrade mislocalized alginate that is trapped in the periplasmic space. The chain is Alginate lyase from Pseudomonas syringae pv. syringae.